We begin with the raw amino-acid sequence, 73 residues long: Putative membrane protein insertion efficiency factor (73 aa).

The protein belongs to the UPF0161 family.

It is found in the cell inner membrane. Could be involved in insertion of integral membrane proteins into the membrane. This is Putative membrane protein insertion efficiency factor from Jannaschia sp. (strain CCS1).